We begin with the raw amino-acid sequence, 180 residues long: Trafficking protein particle complex subunit 3 (180 aa).

Cys68 carries S-palmitoyl cysteine lipidation.

The protein belongs to the TRAPP small subunits family. BET3 subfamily. In terms of assembly, homodimer. Component of the multisubunit transport protein particle (TRAPP) complex, which includes at least TRAPPC2, TRAPPC2L, TRAPPC3, TRAPPC3L, TRAPPC4, TRAPPC5, TRAPPC8, TRAPPC9, TRAPPC10, TRAPPC11 and TRAPPC12. Heterodimer with TRAPPC6A. The heterodimer TRAPPC3-TRAPPC6A interacts with TRAPPC2L. Heterodimer with TRAPPC6b. The heterodimer TRAPPC6B-TRAPPC3 interacts with TRAPPC1 likely providing a core for TRAPP complex formation. As to expression, widely expressed. Expressed in lung, heart, liver, spleen, brain and kidney.

The protein resides in the golgi apparatus. It localises to the cis-Golgi network. It is found in the endoplasmic reticulum. Its function is as follows. May play a role in vesicular transport from endoplasmic reticulum to Golgi. This is Trafficking protein particle complex subunit 3 from Mus musculus (Mouse).